A 406-amino-acid chain; its full sequence is Tryptophan synthase beta chain (406 aa).

Lys99 carries the N6-(pyridoxal phosphate)lysine modification.

This sequence belongs to the TrpB family. In terms of assembly, tetramer of two alpha and two beta chains. Requires pyridoxal 5'-phosphate as cofactor.

It carries out the reaction (1S,2R)-1-C-(indol-3-yl)glycerol 3-phosphate + L-serine = D-glyceraldehyde 3-phosphate + L-tryptophan + H2O. It functions in the pathway amino-acid biosynthesis; L-tryptophan biosynthesis; L-tryptophan from chorismate: step 5/5. The beta subunit is responsible for the synthesis of L-tryptophan from indole and L-serine. The protein is Tryptophan synthase beta chain of Allorhizobium ampelinum (strain ATCC BAA-846 / DSM 112012 / S4) (Agrobacterium vitis (strain S4)).